The following is a 371-amino-acid chain: MARWATMSTETTGTGARDEGPRPGDPADSPFVRACRRKPGPHTPVWFMRQAGRSLPEYRKIRASVAMLESCRRPELITEITLQPVRRHGVDAAILFSDIVVPVAAAGVALDIVPGTGPVVNDPVTTAADVDRIRPISREDVPYVDEAVRMLVGELGATPLIGFAGAPFTLASYLIEGGPSRNHTKTKALMYGDPDLWHALASRLAEVTLAFLKVQIDAGVSAVQLFDSWAGALSEADYRRYVQPHSQAVLAGLADAGVPRIHFGVGTGELLAAMGEAGADVVGVDWRTPLDVATRRVGSERAVQGNLDPCLLFAPWPVIEAEVRRVLAQGRAAPGHIFNLGHGVLPETDPDVLTRVVALIHELTARPNARS.

The span at 1-14 (MARWATMSTETTGT) shows a compositional bias: polar residues. Residues 1 to 30 (MARWATMSTETTGTGARDEGPRPGDPADSP) form a disordered region. Residues 49-53 (RQAGR), Asp98, Tyr173, Ser228, and His342 contribute to the substrate site.

The protein belongs to the uroporphyrinogen decarboxylase family. As to quaternary structure, homodimer.

It is found in the cytoplasm. It catalyses the reaction uroporphyrinogen III + 4 H(+) = coproporphyrinogen III + 4 CO2. The protein operates within porphyrin-containing compound metabolism; protoporphyrin-IX biosynthesis; coproporphyrinogen-III from 5-aminolevulinate: step 4/4. Catalyzes the decarboxylation of four acetate groups of uroporphyrinogen-III to yield coproporphyrinogen-III. This is Uroporphyrinogen decarboxylase from Salinispora tropica (strain ATCC BAA-916 / DSM 44818 / JCM 13857 / NBRC 105044 / CNB-440).